A 237-amino-acid polypeptide reads, in one-letter code: Sugar fermentation stimulation protein homolog (237 aa).

It belongs to the SfsA family.

The polypeptide is Sugar fermentation stimulation protein homolog (Pseudomonas putida (strain W619)).